A 436-amino-acid chain; its full sequence is Histidinol dehydrogenase (436 aa).

Residues Tyr136, Gln198, and Asn221 each contribute to the NAD(+) site. 3 residues coordinate substrate: Ser244, Gln266, and His269. Residues Gln266 and His269 each coordinate Zn(2+). Catalysis depends on proton acceptor residues Glu334 and His335. Positions 335, 368, 422, and 427 each coordinate substrate. Asp368 serves as a coordination point for Zn(2+). His427 contributes to the Zn(2+) binding site.

This sequence belongs to the histidinol dehydrogenase family. Zn(2+) serves as cofactor.

It catalyses the reaction L-histidinol + 2 NAD(+) + H2O = L-histidine + 2 NADH + 3 H(+). It functions in the pathway amino-acid biosynthesis; L-histidine biosynthesis; L-histidine from 5-phospho-alpha-D-ribose 1-diphosphate: step 9/9. Its function is as follows. Catalyzes the sequential NAD-dependent oxidations of L-histidinol to L-histidinaldehyde and then to L-histidine. The sequence is that of Histidinol dehydrogenase from Dehalococcoides mccartyi (strain CBDB1).